Here is a 1154-residue protein sequence, read N- to C-terminus: Polyketide biosynthesis protein ThaF (1154 aa).

Positions 330–714 (MHAFLFPGQG…TNGIAPAARV (385 aa)) are acyl transferase. The segment at 627–689 (SAVAASAPPR…PAPAPAPAPA (63 aa)) is disordered. The span at 641–672 (ADAQPPAASPARAATAASTMPPASASASASAP) shows a compositional bias: low complexity. Pro residues predominate over residues 673–689 (APAPAPAPAPAPAPAPA).

This sequence in the N-terminal section; belongs to the FabD family.

It is found in the cytoplasm. The catalysed reaction is holo-[ACP] + malonyl-CoA = malonyl-[ACP] + CoA. Its pathway is antibiotic biosynthesis. Its function is as follows. Involved in production of the polyketide antibiotic thailandamide. Probably has an acyl transferase activity and could also have a flavin mononucleotide-dependent oxidoreductase activity. The polypeptide is Polyketide biosynthesis protein ThaF (Burkholderia thailandensis (strain ATCC 700388 / DSM 13276 / CCUG 48851 / CIP 106301 / E264)).